Reading from the N-terminus, the 140-residue chain is Large ribosomal subunit protein uL11 (140 aa).

This sequence belongs to the universal ribosomal protein uL11 family. Part of the ribosomal stalk of the 50S ribosomal subunit. Interacts with L10 and the large rRNA to form the base of the stalk. L10 forms an elongated spine to which L12 dimers bind in a sequential fashion forming a multimeric L10(L12)X complex. Post-translationally, one or more lysine residues are methylated.

In terms of biological role, forms part of the ribosomal stalk which helps the ribosome interact with GTP-bound translation factors. In Halothermothrix orenii (strain H 168 / OCM 544 / DSM 9562), this protein is Large ribosomal subunit protein uL11.